We begin with the raw amino-acid sequence, 72 residues long: MSEATNQLKITQVRSTIGARWKQRESLRTLGLRRIRHTVVRDDNAQTRGLIAVVRHLVEVEPAQNGTGGKAQ.

This sequence belongs to the universal ribosomal protein uL30 family. In terms of assembly, part of the 50S ribosomal subunit.

This is Large ribosomal subunit protein uL30 from Mycobacterium ulcerans (strain Agy99).